The primary structure comprises 432 residues: Adenylosuccinate synthetase (432 aa).

Residues 12-18 (GDEGKGK) and 40-42 (GHT) each bind GTP. Aspartate 13 (proton acceptor) is an active-site residue. The Mg(2+) site is built by aspartate 13 and glycine 40. IMP is bound by residues 13 to 16 (DEGK), 38 to 41 (NAGH), threonine 132, arginine 146, glutamine 226, threonine 241, and arginine 305. The Proton donor role is filled by histidine 41. 301 to 307 (TVTGRKR) provides a ligand contact to substrate. GTP-binding positions include arginine 307, 333–335 (KLD), and 415–417 (STS).

This sequence belongs to the adenylosuccinate synthetase family. Homodimer. It depends on Mg(2+) as a cofactor.

It is found in the cytoplasm. The enzyme catalyses IMP + L-aspartate + GTP = N(6)-(1,2-dicarboxyethyl)-AMP + GDP + phosphate + 2 H(+). The protein operates within purine metabolism; AMP biosynthesis via de novo pathway; AMP from IMP: step 1/2. Functionally, plays an important role in the de novo pathway of purine nucleotide biosynthesis. Catalyzes the first committed step in the biosynthesis of AMP from IMP. The protein is Adenylosuccinate synthetase of Agrobacterium fabrum (strain C58 / ATCC 33970) (Agrobacterium tumefaciens (strain C58)).